The primary structure comprises 353 residues: Photosystem II D2 protein (353 aa).

An N-acetylthreonine modification is found at threonine 2. The residue at position 2 (threonine 2) is a Phosphothreonine. A helical membrane pass occupies residues 41–61 (CAYFALGGWFTGTTFVTSWYT). Chlorophyll a is bound at residue histidine 118. The helical transmembrane segment at 125–141 (GFMLRQFELARSVQLRP) threads the bilayer. Pheophytin a contacts are provided by glutamine 130 and asparagine 143. The chain crosses the membrane as a helical span at residues 153 to 166 (VFVSVFLIYPLGQS). Residue histidine 198 coordinates chlorophyll a. The helical transmembrane segment at 208–228 (AALLCAIHGATVENTLFEDGD) threads the bilayer. The a plastoquinone site is built by histidine 215 and phenylalanine 262. Histidine 215 contacts Fe cation. A Fe cation-binding site is contributed by histidine 269. Residues 279–295 (GLWMSAIGVVGLALNLR) form a helical membrane-spanning segment.

Belongs to the reaction center PufL/M/PsbA/D family. In terms of assembly, PSII is composed of 1 copy each of membrane proteins PsbA, PsbB, PsbC, PsbD, PsbE, PsbF, PsbH, PsbI, PsbJ, PsbK, PsbL, PsbM, PsbT, PsbX, PsbY, PsbZ, Psb30/Ycf12, at least 3 peripheral proteins of the oxygen-evolving complex and a large number of cofactors. It forms dimeric complexes. The D1/D2 heterodimer binds P680, chlorophylls that are the primary electron donor of PSII, and subsequent electron acceptors. It shares a non-heme iron and each subunit binds pheophytin, quinone, additional chlorophylls, carotenoids and lipids. There is also a Cl(-1) ion associated with D1 and D2, which is required for oxygen evolution. The PSII complex binds additional chlorophylls, carotenoids and specific lipids. is required as a cofactor.

The protein localises to the plastid. It is found in the chloroplast thylakoid membrane. The enzyme catalyses 2 a plastoquinone + 4 hnu + 2 H2O = 2 a plastoquinol + O2. In terms of biological role, photosystem II (PSII) is a light-driven water:plastoquinone oxidoreductase that uses light energy to abstract electrons from H(2)O, generating O(2) and a proton gradient subsequently used for ATP formation. It consists of a core antenna complex that captures photons, and an electron transfer chain that converts photonic excitation into a charge separation. The D1/D2 (PsbA/PsbD) reaction center heterodimer binds P680, the primary electron donor of PSII as well as several subsequent electron acceptors. D2 is needed for assembly of a stable PSII complex. This is Photosystem II D2 protein from Pinus thunbergii (Japanese black pine).